Consider the following 273-residue polypeptide: Eukaryotic translation initiation factor 3 subunit G-2 (273 aa).

The disordered stretch occupies residues 168–192 (PPFMKDGGGGSGGKNWGRGRDRDDS). The span at 173–183 (DGGGGSGGKNW) shows a compositional bias: gly residues. The 79-residue stretch at 193–271 (SAVRISNLSE…LILCVEWSKP (79 aa)) folds into the RRM domain.

Belongs to the eIF-3 subunit G family. As to quaternary structure, component of the eukaryotic translation initiation factor 3 (eIF-3) complex. The eIF-3 complex interacts with pix.

Its subcellular location is the cytoplasm. RNA-binding component of the eukaryotic translation initiation factor 3 (eIF-3) complex, which is involved in protein synthesis of a specialized repertoire of mRNAs and, together with other initiation factors, stimulates binding of mRNA and methionyl-tRNAi to the 40S ribosome. The eIF-3 complex specifically targets and initiates translation of a subset of mRNAs involved in cell proliferation. This subunit can bind 18S rRNA. The sequence is that of Eukaryotic translation initiation factor 3 subunit G-2 from Drosophila erecta (Fruit fly).